Reading from the N-terminus, the 487-residue chain is uncharacterized protein (487 aa).

ABC transporter domains are found at residues 5 to 249 (VKFA…IPVK) and 265 to 487 (ISME…VIHA). 297-304 (GSNGSGKT) is an ATP binding site.

The protein belongs to the ABC transporter superfamily.

It is found in the mitochondrion. This is an uncharacterized protein from Schizosaccharomyces pombe (strain 972 / ATCC 24843) (Fission yeast).